Here is a 201-residue protein sequence, read N- to C-terminus: MELSLKDASGALEVSEATFGREFNEALVHQVVVAYAAGARQGTRAQKTRSEVSGGGAKPWRQKGTGRARAGTTRGPIWRTGGVTFAAKPQDHSQKVNRKMYRGAIASILSELVRQERLVVVENFSVETPKTKELVAKLKGLELKDVLIVTKEVDENLFLSARNLYKVDVRDVAAIDPVSLVGFEKVLITADAVKEIEGILA.

Positions 43–73 are disordered; it reads TRAQKTRSEVSGGGAKPWRQKGTGRARAGTT.

This sequence belongs to the universal ribosomal protein uL4 family. In terms of assembly, part of the 50S ribosomal subunit.

One of the primary rRNA binding proteins, this protein initially binds near the 5'-end of the 23S rRNA. It is important during the early stages of 50S assembly. It makes multiple contacts with different domains of the 23S rRNA in the assembled 50S subunit and ribosome. In terms of biological role, forms part of the polypeptide exit tunnel. The protein is Large ribosomal subunit protein uL4 of Colwellia psychrerythraea (strain 34H / ATCC BAA-681) (Vibrio psychroerythus).